The primary structure comprises 338 residues: 26S proteasome regulatory subunit RPN8 (338 aa).

Ser-2 carries the N-acetylserine modification. Positions 8 to 143 (VTIAPLVLLS…TDAYVAIEQV (136 aa)) constitute an MPN domain. Residues 301–326 (IQEQRVKDKQSKVSDDSESESGDKEA) are compositionally biased toward basic and acidic residues. The tract at residues 301–338 (IQEQRVKDKQSKVSDDSESESGDKEATAPLIQRKNKKN) is disordered. Phosphoserine is present on residues Ser-314, Ser-317, and Ser-319. Phosphothreonine is present on Thr-327.

Belongs to the peptidase M67A family. N-acetylated by NAT1.

Acts as a regulatory subunit of the 26S proteasome which is involved in the ATP-dependent degradation of ubiquitinated proteins. This is 26S proteasome regulatory subunit RPN8 (RPN8) from Saccharomyces cerevisiae (strain ATCC 204508 / S288c) (Baker's yeast).